Reading from the N-terminus, the 188-residue chain is Pyridoxal 5'-phosphate synthase subunit PdxT (188 aa).

L-glutamine is bound at residue 47–49; it reads GES. The active-site Nucleophile is Cys79. Residues Arg106 and 134–135 each bind L-glutamine; that span reads IR. Active-site charge relay system residues include His169 and Glu171.

It belongs to the glutaminase PdxT/SNO family. In terms of assembly, in the presence of PdxS, forms a dodecamer of heterodimers. Only shows activity in the heterodimer.

It catalyses the reaction aldehydo-D-ribose 5-phosphate + D-glyceraldehyde 3-phosphate + L-glutamine = pyridoxal 5'-phosphate + L-glutamate + phosphate + 3 H2O + H(+). It carries out the reaction L-glutamine + H2O = L-glutamate + NH4(+). Its pathway is cofactor biosynthesis; pyridoxal 5'-phosphate biosynthesis. In terms of biological role, catalyzes the hydrolysis of glutamine to glutamate and ammonia as part of the biosynthesis of pyridoxal 5'-phosphate. The resulting ammonia molecule is channeled to the active site of PdxS. The sequence is that of Pyridoxal 5'-phosphate synthase subunit PdxT from Caldicellulosiruptor bescii (strain ATCC BAA-1888 / DSM 6725 / KCTC 15123 / Z-1320) (Anaerocellum thermophilum).